The primary structure comprises 340 residues: Solute carrier family 35 member G3 (340 aa).

The interval 11–31 is disordered; that stretch reads PDFTQPSPPSTPSSLTSNHHN. 9 helical membrane passes run 39–59, 69–89, 107–127, 160–180, 189–209, 223–243, 257–277, 283–303, and 307–327; these read TKGLFVALLGGGLSAGFVGPF, LPSLELLIFRCLFHLPIALIL, FLHAILNVLSIGCAYSAVQVV, AWCGLFGSTLGLIIIVGPGLG, LYTALGYVLAFLGGLALSLGL, TVAFLFGLVGLIVSVPGLFVL, CMVAVGLLALVSFVCVSYAVT, LVCAVLHSEVVVALMLQYYVL, and VAPSDIMGAGVVLGSIAIITA. The region spanning 51 to 176 is the EamA 1 domain; the sequence is LSAGFVGPFS…STLGLIIIVG (126 aa). The EamA 2 domain maps to 223-327; that stretch reads TVAFLFGLVG…VLGSIAIITA (105 aa).

It belongs to the SLC35G solute transporter family.

Its subcellular location is the membrane. This chain is Solute carrier family 35 member G3 (Slc35g3), found in Rattus norvegicus (Rat).